The sequence spans 495 residues: Lanosterol 14-alpha demethylase erg11 (495 aa).

The helical transmembrane segment at 2 to 22 threads the bilayer; it reads AFSLVSILLSIALAWYVGYII. Cys442 provides a ligand contact to heme.

Belongs to the cytochrome P450 family. Interacts with dap1. Requires heme as cofactor.

It is found in the endoplasmic reticulum. The protein resides in the membrane. The enzyme catalyses a 14alpha-methyl steroid + 3 reduced [NADPH--hemoprotein reductase] + 3 O2 = a Delta(14) steroid + formate + 3 oxidized [NADPH--hemoprotein reductase] + 4 H2O + 4 H(+). It carries out the reaction a 14alpha-methyl steroid + reduced [NADPH--hemoprotein reductase] + O2 = a 14alpha-hydroxymethyl steroid + oxidized [NADPH--hemoprotein reductase] + H2O + H(+). It catalyses the reaction a 14alpha-hydroxymethyl steroid + reduced [NADPH--hemoprotein reductase] + O2 = a 14alpha-formyl steroid + oxidized [NADPH--hemoprotein reductase] + 2 H2O + H(+). The catalysed reaction is a 14alpha-formyl steroid + reduced [NADPH--hemoprotein reductase] + O2 = a Delta(14) steroid + formate + oxidized [NADPH--hemoprotein reductase] + H2O + 2 H(+). The enzyme catalyses lanosterol + 3 reduced [NADPH--hemoprotein reductase] + 3 O2 = 4,4-dimethyl-5alpha-cholesta-8,14,24-trien-3beta-ol + formate + 3 oxidized [NADPH--hemoprotein reductase] + 4 H2O + 4 H(+). It carries out the reaction lanosterol + reduced [NADPH--hemoprotein reductase] + O2 = 32-hydroxylanosterol + oxidized [NADPH--hemoprotein reductase] + H2O + H(+). It catalyses the reaction 32-hydroxylanosterol + reduced [NADPH--hemoprotein reductase] + O2 = 32-oxolanosterol + oxidized [NADPH--hemoprotein reductase] + 2 H2O + H(+). The catalysed reaction is 32-oxolanosterol + reduced [NADPH--hemoprotein reductase] + O2 = 4,4-dimethyl-5alpha-cholesta-8,14,24-trien-3beta-ol + formate + oxidized [NADPH--hemoprotein reductase] + H2O + 2 H(+). The enzyme catalyses eburicol + 3 reduced [NADPH--hemoprotein reductase] + 3 O2 = 14-demethyleburicol + formate + 3 oxidized [NADPH--hemoprotein reductase] + 4 H2O + 4 H(+). It carries out the reaction eburicol + reduced [NADPH--hemoprotein reductase] + O2 = 32-hydroxyeburicol + oxidized [NADPH--hemoprotein reductase] + H2O + H(+). It catalyses the reaction 32-hydroxyeburicol + reduced [NADPH--hemoprotein reductase] + O2 = 32-oxoeburicol + oxidized [NADPH--hemoprotein reductase] + 2 H2O + H(+). The catalysed reaction is 32-oxoeburicol + reduced [NADPH--hemoprotein reductase] + O2 = 14-demethyleburicol + formate + oxidized [NADPH--hemoprotein reductase] + H2O + 2 H(+). It functions in the pathway steroid biosynthesis; zymosterol biosynthesis; zymosterol from lanosterol: step 1/6. It participates in steroid metabolism; ergosterol biosynthesis. Functionally, sterol 14alpha-demethylase that plays a critical role in the third module of ergosterol biosynthesis pathway, being ergosterol the major sterol component in fungal membranes that participates in a variety of functions. The third module or late pathway involves the ergosterol synthesis itself through consecutive reactions that mainly occur in the endoplasmic reticulum (ER) membrane. In filamentous fungi, during the initial step of this module, lanosterol (lanosta-8,24-dien-3beta-ol) can be metabolized to eburicol. Sterol 14alpha-demethylase catalyzes the three-step oxidative removal of the 14alpha-methyl group (C-32) of both these sterols in the form of formate, and converts eburicol and lanosterol to 14-demethyleburicol (4,4,24-trimethylergosta-8,14,24(28)-trienol) and 4,4-dimethyl-5alpha-cholesta-8,14,24-trien-3beta-ol, respectively, which are further metabolized by other enzymes in the pathway to ergosterol. Can also use substrates not intrinsic to fungi, such as 24,25-dihydrolanosterol (DHL), producing 4,4-dimethyl-8,14-cholestadien-3-beta-ol, but at lower rates than the endogenous substrates. The sequence is that of Lanosterol 14-alpha demethylase erg11 from Schizosaccharomyces pombe (strain 972 / ATCC 24843) (Fission yeast).